The sequence spans 63 residues: Large ribosomal subunit protein uL29 (63 aa).

It belongs to the universal ribosomal protein uL29 family.

The sequence is that of Large ribosomal subunit protein uL29 from Klebsiella pneumoniae (strain 342).